Here is a 265-residue protein sequence, read N- to C-terminus: O-methyltransferase NEC2 (265 aa).

This sequence belongs to the methyltransferase superfamily.

It carries out the reaction desmethylnectriapyrone + S-adenosyl-L-methionine = nectriapyrone + S-adenosyl-L-homocysteine + H(+). Its function is as follows. O-methyltransferase; part of the gene cluster that mediates the biosynthesis of nectriapyrone and its analogs phomopyrone A, acropyrone and zaepyrone. The nectriapyrone biosynthetic gene cluster consists of two genes, the highly reducing polyketide synthase NEC1 that produces a demethylated analog of nectriapyrone from one unit of acetyl-CoA and one unit of malonyl-CoA; and the O-methyltransferase NEC2 that further methylates the NEC1 product to yield nectriapyrone. Nectriapyrone is further hydrolyzed to nectriapyrone D, also known as gulypyrone B, by an unidentified hydrolase localized outside the nectriapyrone cluster. The sequence is that of O-methyltransferase NEC2 from Pyricularia oryzae (strain 70-15 / ATCC MYA-4617 / FGSC 8958) (Rice blast fungus).